The chain runs to 461 residues: pre-mRNA splicing regulator USH1G (461 aa).

ANK repeat units follow at residues 31 to 60, 64 to 93, and 97 to 126; these read DGMT…DPDK, WGNT…NIWC, and DYHT…KQSS. Disordered stretches follow at residues 208-243 and 332-368; these read GTAR…SARS and EDGG…DRSC. Basic residues predominate over residues 210–222; sequence ARGKTKMQKKLER. The region spanning 385-447 is the SAM domain; it reads LEPETSPLET…KILGAVRRRR (63 aa). Position 422 is a phosphoserine; by CK2 (serine 422).

Part of a complex composed of USH1C, USH1G and MYO7A. Interacts with USH1C (via the first PDZ domain). Interacts with PDZD7. Interacts with CDH23 and PCDH15; these interactions may recruit USH1G to the plasma membrane. Interacts with intraflagellar transport proteins IFT20, IFT52 and IFT57. Interacts with splicing factors SF3B1, PRPF6, PRPF31 and SON. Interacts with the U4/U6.U5 tri-small nuclear ribonucleoprotein (tri-snRNP) complex in the presence of pre-mRNAs. Interacts (via SAM domain) with MAGI2 (via PDZ 6 domain); the interaction is triggered by phosphorylation of USH1G by CK2 and negatively regulates MAGI2-mediated endocytosis. In terms of tissue distribution, expressed in vestibule of the inner ear, eye and small intestine.

Its subcellular location is the cytoplasm. It is found in the cytosol. The protein localises to the cytoskeleton. The protein resides in the cell membrane. It localises to the cell projection. Its subcellular location is the cilium. It is found in the nucleus speckle. The protein localises to the nucleus. The protein resides in the cajal body. It localises to the microtubule organizing center. Its subcellular location is the centrosome. It is found in the photoreceptor inner segment. Functionally, plays a role in pre-mRNA splicing by regulating the release and transfer of U4/U6.U5 tri-small nuclear ribonucleoprotein (tri-snRNP) complexes from their assembly site in Cajal bodies to nuclear speckles, thereby contributing to the assembly of the pre-catalytic spliceosome on target pre-mRNAs. May also participate in recycling of snRNPs back to Cajal bodies during splicing. Plays a role in regulating MAGI2-mediated endocytosis. Anchoring/scaffolding protein that is a part of the functional network formed by USH1C, USH1G, CDH23 and MYO7A that mediates mechanotransduction in cochlear hair cells. Required for normal development and maintenance of cochlear hair cell bundles. Required for normal hearing. The chain is pre-mRNA splicing regulator USH1G (USH1G) from Homo sapiens (Human).